Reading from the N-terminus, the 253-residue chain is Ribonuclease 3 (253 aa).

One can recognise an RNase III domain in the interval 29–157 (VDELQKTIGH…MLGAVFLDAG (129 aa)). Residue E70 coordinates Mg(2+). D74 is a catalytic residue. Residues D143 and E146 each contribute to the Mg(2+) site. E146 is a catalytic residue. The 70-residue stretch at 184 to 253 (DYKSQLQELT…AARAVATLDK (70 aa)) folds into the DRBM domain.

This sequence belongs to the ribonuclease III family. In terms of assembly, homodimer. Mg(2+) serves as cofactor.

Its subcellular location is the cytoplasm. It catalyses the reaction Endonucleolytic cleavage to 5'-phosphomonoester.. Functionally, digests double-stranded RNA. Involved in the processing of primary rRNA transcript to yield the immediate precursors to the large and small rRNAs (23S and 16S). Processes some mRNAs, and tRNAs when they are encoded in the rRNA operon. Processes pre-crRNA and tracrRNA of type II CRISPR loci if present in the organism. This is Ribonuclease 3 from Nitratidesulfovibrio vulgaris (strain ATCC 29579 / DSM 644 / CCUG 34227 / NCIMB 8303 / VKM B-1760 / Hildenborough) (Desulfovibrio vulgaris).